Reading from the N-terminus, the 113-residue chain is Nucleoid-associated protein PMT_0025 (113 aa).

This sequence belongs to the YbaB/EbfC family. As to quaternary structure, homodimer.

It localises to the cytoplasm. Its subcellular location is the nucleoid. Binds to DNA and alters its conformation. May be involved in regulation of gene expression, nucleoid organization and DNA protection. The protein is Nucleoid-associated protein PMT_0025 of Prochlorococcus marinus (strain MIT 9313).